The following is a 335-amino-acid chain: Nod factor export ATP-binding protein I (335 aa).

The span at 1 to 10 (MTQEVPRRLE) shows a compositional bias: basic and acidic residues. Positions 1–22 (MTQEVPRRLEPSPFEWKGDAGP) are disordered. An ABC transporter domain is found at 37 to 267 (IDLASVTKSY…KIGCQVIEIY (231 aa)). Residue 69-76 (GPNGAGKS) participates in ATP binding.

This sequence belongs to the ABC transporter superfamily. Lipooligosaccharide exporter (TC 3.A.1.102) family. In terms of assembly, the complex is composed of two ATP-binding proteins (NodI) and two transmembrane proteins (NodJ).

The protein localises to the cell inner membrane. Part of the ABC transporter complex NodIJ involved in the export of the nodulation factors (Nod factors), the bacterial signal molecules that induce symbiosis and subsequent nodulation induction. Nod factors are LCO (lipo-chitin oligosaccharide), a modified beta-1,4-linked N-acetylglucosamine oligosaccharide. This subunit is responsible for energy coupling to the transport system. The chain is Nod factor export ATP-binding protein I from Rhizobium meliloti (Ensifer meliloti).